The primary structure comprises 118 residues: MVTPAGCLGGRNQGPREIPGTAFPCSSRAGQTGQAVSGAQVSSWRERQPFGGSRGPLHILGTDGNVDTTGKLGLVPTPPRIQKETKQGALCGMKPPFLPEALLTVWWLPFVAVSLCLF.

Residues 1–64 (MVTPAGCLGG…GPLHILGTDG (64 aa)) form a disordered region. The segment covering 28-43 (RAGQTGQAVSGAQVSS) has biased composition (polar residues).

This is Putative cytochrome P450 family member 4F30 (CYP4F30P) from Homo sapiens (Human).